Reading from the N-terminus, the 204-residue chain is UPF0637 protein lmo1065 (204 aa).

It belongs to the UPF0637 family.

This chain is UPF0637 protein lmo1065, found in Listeria monocytogenes serovar 1/2a (strain ATCC BAA-679 / EGD-e).